The chain runs to 163 residues: Nucleotide-binding protein DvMF_3058 (163 aa).

This sequence belongs to the YajQ family.

Its function is as follows. Nucleotide-binding protein. This Nitratidesulfovibrio vulgaris (strain DSM 19637 / Miyazaki F) (Desulfovibrio vulgaris) protein is Nucleotide-binding protein DvMF_3058.